Here is a 276-residue protein sequence, read N- to C-terminus: NH(3)-dependent NAD(+) synthetase (276 aa).

An ATP-binding site is contributed by 43–50 (GISGGVDS). Asp-49 lines the Mg(2+) pocket. Arg-146 is a binding site for deamido-NAD(+). Thr-166 lines the ATP pocket. Residue Glu-171 participates in Mg(2+) binding. Residues Lys-179 and Asp-186 each coordinate deamido-NAD(+). Residues Lys-195 and Thr-217 each contribute to the ATP site. Position 266 to 267 (266 to 267 (HK)) interacts with deamido-NAD(+).

This sequence belongs to the NAD synthetase family. As to quaternary structure, homodimer.

It catalyses the reaction deamido-NAD(+) + NH4(+) + ATP = AMP + diphosphate + NAD(+) + H(+). Its pathway is cofactor biosynthesis; NAD(+) biosynthesis; NAD(+) from deamido-NAD(+) (ammonia route): step 1/1. Catalyzes the ATP-dependent amidation of deamido-NAD to form NAD. Uses ammonia as a nitrogen source. The protein is NH(3)-dependent NAD(+) synthetase of Shewanella putrefaciens (strain CN-32 / ATCC BAA-453).